A 121-amino-acid chain; its full sequence is Large ribosomal subunit protein bL19 (121 aa).

The protein belongs to the bacterial ribosomal protein bL19 family.

Functionally, this protein is located at the 30S-50S ribosomal subunit interface and may play a role in the structure and function of the aminoacyl-tRNA binding site. This Gloeobacter violaceus (strain ATCC 29082 / PCC 7421) protein is Large ribosomal subunit protein bL19.